Reading from the N-terminus, the 246-residue chain is Octanoyltransferase (246 aa).

The BPL/LPL catalytic domain occupies 50-231; sequence PDTDDEIWVV…RLIAHLDGAT (182 aa). Substrate-binding positions include 90-97, 162-164, and 175-177; these read RGGQITYH, ALG, and GLS. C193 (acyl-thioester intermediate) is an active-site residue.

It belongs to the LipB family.

The protein localises to the cytoplasm. The enzyme catalyses octanoyl-[ACP] + L-lysyl-[protein] = N(6)-octanoyl-L-lysyl-[protein] + holo-[ACP] + H(+). The protein operates within protein modification; protein lipoylation via endogenous pathway; protein N(6)-(lipoyl)lysine from octanoyl-[acyl-carrier-protein]: step 1/2. In terms of biological role, catalyzes the transfer of endogenously produced octanoic acid from octanoyl-acyl-carrier-protein onto the lipoyl domains of lipoate-dependent enzymes. Lipoyl-ACP can also act as a substrate although octanoyl-ACP is likely to be the physiological substrate. In Burkholderia pseudomallei (strain 1106a), this protein is Octanoyltransferase.